An 878-amino-acid chain; its full sequence is Calcium-transporting ATPase 1 (878 aa).

The next 4 membrane-spanning stretches (helical) occupy residues 50–72 (LFID…VQLF), 76–95 (FVES…VAVV), 243–263 (LGWV…LRLF), and 281–301 (FAVA…VTIV). Residues Val287, Ala288, Ile290, and Glu292 each contribute to the Ca(2+) site. Asp334 functions as the 4-aspartylphosphate intermediate in the catalytic mechanism. 6 consecutive transmembrane segments (helical) span residues 681 to 701 (LFSG…VGWV), 704 to 724 (FTAL…AIAL), 753 to 773 (VILI…YVGQ), 779 to 799 (MGVA…TFAA), 816 to 836 (YVLM…LPFL), and 845 to 865 (AFGW…VICM). Ca(2+)-binding residues include Asn713 and Asp717.

The protein belongs to the cation transport ATPase (P-type) (TC 3.A.3) family. Type IIA subfamily.

Its subcellular location is the cell membrane. The enzyme catalyses Ca(2+)(in) + ATP + H2O = Ca(2+)(out) + ADP + phosphate + H(+). With respect to regulation, inhibited by very high concentrations of cyclopiazonic acid (CPA). Its function is as follows. Catalyzes the hydrolysis of ATP coupled with the transport of calcium. The chain is Calcium-transporting ATPase 1 (yoaB) from Lactococcus lactis subsp. lactis (strain IL1403) (Streptococcus lactis).